Consider the following 191-residue polypeptide: Nucleoside triphosphate pyrophosphatase (191 aa).

Asp-70 serves as the catalytic Proton acceptor.

It belongs to the Maf family. Requires a divalent metal cation as cofactor.

It is found in the cytoplasm. It carries out the reaction a ribonucleoside 5'-triphosphate + H2O = a ribonucleoside 5'-phosphate + diphosphate + H(+). The enzyme catalyses a 2'-deoxyribonucleoside 5'-triphosphate + H2O = a 2'-deoxyribonucleoside 5'-phosphate + diphosphate + H(+). Its function is as follows. Nucleoside triphosphate pyrophosphatase. May have a dual role in cell division arrest and in preventing the incorporation of modified nucleotides into cellular nucleic acids. This is Nucleoside triphosphate pyrophosphatase from Synechococcus sp. (strain WH7803).